The following is a 142-amino-acid chain: Class II hydrophobin 7 (142 aa).

Residues 1–16 (MKFLTVAIVLAAAASA) form the signal peptide. Cystine bridges form between Cys73-Cys123, Cys84-Cys114, Cys85-Cys97, and Cys124-Cys135.

It belongs to the cerato-ulmin hydrophobin family. In terms of assembly, homodimer. Homodimers further self-assemble to form highly ordered films at water-air interfaces through intermolecular interactions.

The protein resides in the secreted. Its subcellular location is the cell wall. Aerial growth, conidiation, and dispersal of filamentous fungi in the environment rely upon a capability of their secreting small amphipathic proteins called hydrophobins (HPBs) with low sequence identity. Class I can self-assemble into an outermost layer of rodlet bundles on aerial cell surfaces, conferring cellular hydrophobicity that supports fungal growth, development and dispersal; whereas Class II form highly ordered films at water-air interfaces through intermolecular interactions but contribute nothing to the rodlet structure. The protein is Class II hydrophobin 7 of Trichoderma asperellum (strain ATCC 204424 / CBS 433.97 / NBRC 101777).